Reading from the N-terminus, the 424-residue chain is Putative histone deacetylase complex subunit cti6 (424 aa).

Disordered stretches follow at residues 1-49 (MPSN…GEVT), 117-155 (SKYLGNGKPIEASQTEESSSTPPSPATKKSSKQRLTMNS), 170-341 (KEKS…PDGT), and 381-405 (AQSAGNQSSTKSSKEGPEEEKETLR). The PHD-type zinc finger occupies 48–103 (VTRCVCGIVESDDEASDGGLYIQCDQCSVWQHGNCVGFADESEVPEVYYCEICHPE). Low complexity predominate over residues 127-137 (EASQTEESSST). Ser187 is modified (phosphoserine). Residues 241–256 (DAPEEETVDTVEEIAD) are compositionally biased toward acidic residues. Positions 257–266 (EEKHSVKEES) are enriched in basic and acidic residues. The segment covering 272-287 (QSSQQSTITSISTTTR) has biased composition (low complexity). The segment covering 294–303 (REAAAEDKAD) has biased composition (basic and acidic residues). Basic residues predominate over residues 313-324 (SKTRKVGGRRGK). The span at 392–405 (SSKEGPEEEKETLR) shows a compositional bias: basic and acidic residues.

The protein localises to the cytoplasm. It is found in the nucleus. In terms of biological role, could be a component of the RPD3C(L) histone deacetylase complex (HDAC). The chain is Putative histone deacetylase complex subunit cti6 (cti6) from Schizosaccharomyces pombe (strain 972 / ATCC 24843) (Fission yeast).